Here is a 1220-residue protein sequence, read N- to C-terminus: Osmosensing histidine protein kinase SLN1 (1220 aa).

The Cytoplasmic segment spans residues 1–22; the sequence is MRFGLPSKLELTPPFRIGIRTQ. Residues 23–46 form a helical membrane-spanning segment; it reads LTALVSIVALGSLIILAVTTGVYF. Over 47–333 the chain is Extracellular; it reads TSNYKNLRSD…FLSPATKLAK (287 aa). Asn-100, Asn-138, Asn-142, Asn-181, Asn-224, and Asn-272 each carry an N-linked (GlcNAc...) asparagine glycan. A helical transmembrane segment spans residues 334–354; it reads IITGTVIAIGVFVILLTLPLA. Residues 355-1220 lie on the Cytoplasmic side of the membrane; the sequence is HWAVQPIVRL…AAYQGKKNNK (866 aa). Disordered regions lie at residues 414-433 and 444-500; these read GSTTSVSGHGGSGHGSGAAF and NLGN…HILT. A compositionally biased stretch (basic and acidic residues) spans 451–468; it reads SPPEEENKIPNNHTDAKI. Ser-502 carries the phosphoserine modification. Residues 573–928 enclose the Histidine kinase domain; that stretch reads NISHELRTPL…KFTFTLPLNQ (356 aa). At His-576 the chain carries Phosphohistidine; by autocatalysis. A phosphoserine mark is found at Ser-758 and Ser-833. Disordered stretches follow at residues 960–1016 and 1040–1081; these read AKSI…DNGG and NSLS…VKDD. The segment covering 965–984 has biased composition (polar residues); it reads SRQSTSSVATPATNRSSLTN. Residues 988–1000 show a composition bias toward basic and acidic residues; the sequence is PEVRSKGKHETKD. Residues Ser-1041 and Ser-1044 each carry the phosphoserine modification. Positions 1063–1075 are enriched in polar residues; sequence LQSTGTATSSRNI. A Response regulatory domain is found at 1089–1210; that stretch reads KILVVEDNHV…KLKTILTEFC (122 aa). Residues Glu-1094, Asp-1095, Asp-1144, and Lys-1195 each coordinate Mg(2+). Asp-1144 carries the post-translational modification 4-aspartylphosphate.

As to quaternary structure, interacts with DJP1, MOG1 and YPD1. Post-translationally, the phosphorelay mechanism involves the sequential transfer of a phosphate group from His-576 (H1) in the histidine kinase domain (transmitter domain) to Asp-1144 (D1) of the response regulatory domain (receiver domain). This transfer probably occurs between two SLN1 molecules, rather than intramolecularly. The phosphate group is further transferred to 'His-64' (H2) of YPD1 and finally to 'Asp-554' (D2) of SSK1 or 'Asp-427' (D2) of SKN7.

The protein localises to the cell membrane. It carries out the reaction ATP + protein L-histidine = ADP + protein N-phospho-L-histidine.. Functionally, histidine kinase that acts as an osmosensor at the plasma membrane. Part of the bifurcated SLN1-YPD1-SKN7/SSK1 two-component regulatory system, which controls activity of the HOG1 pathway and gene expression in response to changes in the osmolarity of the extracellular environment. Under normal osmotic conditions, the histidine kinase autophosphorylates His-576. This phosphate is subsequently transferred to Asp-1144, from where it is relayed to 'His-64' of the phosphorelay intermediate protein YPD1. Under high osmolarity conditions, the histidine kinase is no longer active. This Saccharomyces cerevisiae (strain ATCC 204508 / S288c) (Baker's yeast) protein is Osmosensing histidine protein kinase SLN1 (SLN1).